The sequence spans 285 residues: Nucleotide-binding protein GSU1884 (285 aa).

8–15 (GLSGSGKS) serves as a coordination point for ATP. Residue 59-62 (DIRG) participates in GTP binding.

This sequence belongs to the RapZ-like family.

Functionally, displays ATPase and GTPase activities. This is Nucleotide-binding protein GSU1884 from Geobacter sulfurreducens (strain ATCC 51573 / DSM 12127 / PCA).